The sequence spans 132 residues: MVMTDPIADMLTRIRNANMVRHEKLEVPASKIKREIAEILKREGFIRDVEYIEDNKQGILRIFLKYGPNNERVITGLKRISKPGLRVYAKADEVPRVLNGLGIAILSTSQGILTDKEARQKRTGGEVLAYIW.

It belongs to the universal ribosomal protein uS8 family. Part of the 30S ribosomal subunit. Contacts proteins S5 and S12.

One of the primary rRNA binding proteins, it binds directly to 16S rRNA central domain where it helps coordinate assembly of the platform of the 30S subunit. This chain is Small ribosomal subunit protein uS8, found in Anoxybacillus flavithermus (strain DSM 21510 / WK1).